Reading from the N-terminus, the 221-residue chain is MAQGILGKKIGMTQVFNEQGELVPVTIVDVAANVVLQQKNVDQDGYQATQIGFCDKREKNTSKPMLGHFKKATTAPKRFIKEINFSSDVNSNLANLVVGALITNDLFQVGDLVDVTGTSKGKGFAGSIKRHNQSRGPESHGSRYHRRPGSMGPIKGKLKGKKLPGHMGYETVTIQNLAILSIDTEKNLFLIKGNVPGPNKGFVMIKSAVKKLTKEQTHAKN.

The disordered stretch occupies residues 123–156 (GFAGSIKRHNQSRGPESHGSRYHRRPGSMGPIKG).

The protein belongs to the universal ribosomal protein uL3 family. In terms of assembly, part of the 50S ribosomal subunit. Forms a cluster with proteins L14 and L19.

Its function is as follows. One of the primary rRNA binding proteins, it binds directly near the 3'-end of the 23S rRNA, where it nucleates assembly of the 50S subunit. This chain is Large ribosomal subunit protein uL3, found in Aster yellows witches'-broom phytoplasma (strain AYWB).